The sequence spans 1653 residues: Ciliary rootlet coiled-coil protein 2 (1653 aa).

Polar residues predominate over residues 1–17 (MSSASSEPGNGDASQQP). The interval 1–57 (MSSASSEPGNGDASQQPLLGLDTVIQRLEDTILSPTASREDRALTVRGEGRQASPTP) is disordered. Residues 38 to 50 (SREDRALTVRGEG) are compositionally biased toward basic and acidic residues. 2 coiled-coil regions span residues 86 to 145 (VARV…SELE) and 310 to 351 (KVAL…LVAQ). Residues 367–396 (LGEPRRPLRSPQRATSPHQGASPPHICSPA) are disordered. Positions 423-1215 (LKSSQALVAS…QRKLAEVEAA (793 aa)) form a coiled coil. A disordered region spans residues 1302–1356 (GLQRQSPWASPEQPGSPTKGSDSSQALPGQQGTSPPARPHSPLRWPSPTPGGRSS). Positions 1304-1335 (QRQSPWASPEQPGSPTKGSDSSQALPGQQGTS) are enriched in polar residues. Residues 1361–1570 (VATVQDILRD…QAQMTEMEQA (210 aa)) adopt a coiled-coil conformation.

This sequence belongs to the rootletin family.

The sequence is that of Ciliary rootlet coiled-coil protein 2 from Homo sapiens (Human).